The sequence spans 98 residues: Large ribosomal subunit protein eL14 (98 aa).

Belongs to the eukaryotic ribosomal protein eL14 family.

The chain is Large ribosomal subunit protein eL14 from Thermofilum pendens (strain DSM 2475 / Hrk 5).